The chain runs to 139 residues: Putative pre-16S rRNA nuclease (139 aa).

The protein belongs to the YqgF nuclease family.

Its subcellular location is the cytoplasm. Could be a nuclease involved in processing of the 5'-end of pre-16S rRNA. This Streptococcus pyogenes serotype M49 (strain NZ131) protein is Putative pre-16S rRNA nuclease.